The chain runs to 154 residues: Lipoprotein signal peptidase (154 aa).

The next 2 helical transmembrane spans lie at 55-75 (GHMWFFYLITVVVIGIIIYIM) and 84-104 (LFSISLAFILGGAIGNFIDRV). Catalysis depends on residues Asp111 and Asp129. The chain crosses the membrane as a helical span at residues 124 to 144 (IFNVADASLSVGVVLMLVYVF).

Belongs to the peptidase A8 family.

The protein resides in the cell membrane. It carries out the reaction Release of signal peptides from bacterial membrane prolipoproteins. Hydrolyzes -Xaa-Yaa-Zaa-|-(S,diacylglyceryl)Cys-, in which Xaa is hydrophobic (preferably Leu), and Yaa (Ala or Ser) and Zaa (Gly or Ala) have small, neutral side chains.. It participates in protein modification; lipoprotein biosynthesis (signal peptide cleavage). Functionally, this protein specifically catalyzes the removal of signal peptides from prolipoproteins. This is Lipoprotein signal peptidase from Listeria monocytogenes serovar 1/2a (strain ATCC BAA-679 / EGD-e).